The following is a 600-amino-acid chain: Albumin (600 aa).

Positions 1 to 10 (LLFLFSSAYS) are cleaved as a signal peptide. Positions 11–16 (RGVFRR) are excised as a propeptide. 3 Albumin domains span residues 11-202 (RGVF…DELR), 203-395 (DEGK…EFQP), and 396-593 (LVEE…KFVA). His-19 serves as a coordination point for Cu cation. Ser-21 carries the phosphoserine modification. Ca(2+) contacts are provided by Glu-22 and Asp-29. Residues Cys-69 and Cys-78 are joined by a disulfide bond. A phosphoserine mark is found at Ser-74 and Ser-81. His-83 contacts Zn(2+). Cystine bridges form between Cys-91–Cys-107, Cys-106–Cys-117, Cys-140–Cys-185, Cys-184–Cys-193, Cys-216–Cys-262, and Cys-261–Cys-269. At Thr-99 the chain carries Phosphothreonine. The residue at position 221 (Lys-221) is an N6-succinyllysine. Lys-256 lines the (4Z,15Z)-bilirubin IXalpha pocket. Residue Glu-260 coordinates Ca(2+). Residues His-263 and Asp-265 each contribute to the Zn(2+) site. 4 residues coordinate Ca(2+): Asp-265, Glu-268, Asp-271, and Asp-275. 8 cysteine pairs are disulfide-bonded: Cys-281-Cys-295, Cys-294-Cys-305, Cys-332-Cys-377, Cys-376-Cys-385, Cys-408-Cys-454, Cys-453-Cys-464, Cys-477-Cys-493, and Cys-492-Cys-503. At Ser-289 the chain carries Phosphoserine. Residue Ser-435 is modified to Phosphoserine. A phosphothreonine mark is found at Thr-436 and Thr-438. Residue Lys-452 is modified to N6-succinyllysine. Ser-505 is subject to Phosphoserine. Disulfide bonds link Cys-530/Cys-575 and Cys-574/Cys-583. N6-succinyllysine is present on Lys-535. Lys-550 carries the post-translational modification N6-methyllysine. Residue Lys-580 is modified to N6-succinyllysine.

This sequence belongs to the ALB/AFP/VDB family. As to quaternary structure, interacts with FCGRT; this interaction regulates ALB homeostasis. Interacts with TASOR. In plasma, occurs in a covalently-linked complex with chromophore-bound alpha-1-microglobulin; this interaction does not prevent fatty acid binding to ALB. In terms of processing, phosphorylated by FAM20C in the extracellular medium. As to expression, plasma.

It localises to the secreted. In terms of biological role, binds water, Ca(2+), Na(+), K(+), fatty acids, hormones, bilirubin and drugs. Its main function is the regulation of the colloidal osmotic pressure of blood. Major zinc transporter in plasma, typically binds about 80% of all plasma zinc. Major calcium and magnesium transporter in plasma, binds approximately 45% of circulating calcium and magnesium in plasma. Potentially has more than two calcium-binding sites and might additionally bind calcium in a non-specific manner. The shared binding site between zinc and calcium at residue Asp-265 suggests a crosstalk between zinc and calcium transport in the blood. The rank order of affinity is zinc &gt; calcium &gt; magnesium. Binds to the bacterial siderophore enterobactin and inhibits enterobactin-mediated iron uptake of E.coli from ferric transferrin, and may thereby limit the utilization of iron and growth of enteric bacteria such as E.coli. Does not prevent iron uptake by the bacterial siderophore aerobactin. The protein is Albumin (ALB) of Macaca mulatta (Rhesus macaque).